A 230-amino-acid polypeptide reads, in one-letter code: MARAAVRAGAKVALIDRDGACAEKAAAEIGAAAWGVGADVTDEAAIAAAMAGAERALGPLTGLVNNAGIAGFGSVHTTEVETWGRIMAVNVTGTFLASKAALSGMLERRRGAIVNFGSVAGLVGIPSMAAYCAAKGAVVSLTRQMAAEYSGQGIRVNVVCPGTVASTDMGRQLLGQDADPELEARRLAKYPIGRFGTPEDIAEAAIFLLSTKAAFVTGCVFAVDGGMTAI.

It belongs to the short-chain dehydrogenases/reductases (SDR) family.

This Xanthobacter autotrophicus (strain ATCC BAA-1158 / Py2) protein is Inactive 2-(S)-hydroxypropyl-CoM dehydrogenase 2.